The primary structure comprises 202 residues: Ribosomal RNA small subunit methyltransferase G (202 aa).

S-adenosyl-L-methionine-binding positions include Gly75, Phe80, 125-126 (VQ), and Arg139.

It belongs to the methyltransferase superfamily. RNA methyltransferase RsmG family.

It is found in the cytoplasm. Specifically methylates the N7 position of a guanine in 16S rRNA. The polypeptide is Ribosomal RNA small subunit methyltransferase G (Mesomycoplasma hyopneumoniae (strain 7448) (Mycoplasma hyopneumoniae)).